The primary structure comprises 245 residues: Small ribosomal subunit protein uS3 (245 aa).

In terms of domain architecture, KH type-2 spans 21-92 (LNEFLTRELA…SVELYAEKVA (72 aa)). Residues 215–245 (EEILPTTPVSEQKGAKPEVPVMPQGAPVPTA) are disordered.

This sequence belongs to the universal ribosomal protein uS3 family.

The protein resides in the cytoplasm. The protein localises to the nucleus. Its subcellular location is the nucleolus. It localises to the mitochondrion inner membrane. It is found in the cytoskeleton. The protein resides in the spindle. It catalyses the reaction 2'-deoxyribonucleotide-(2'-deoxyribose 5'-phosphate)-2'-deoxyribonucleotide-DNA = a 3'-end 2'-deoxyribonucleotide-(2,3-dehydro-2,3-deoxyribose 5'-phosphate)-DNA + a 5'-end 5'-phospho-2'-deoxyribonucleoside-DNA + H(+). Component of the small ribosomal subunit. The ribosome is a large ribonucleoprotein complex responsible for the synthesis of proteins in the cell. Has endonuclease activity and plays a role in repair of damaged DNA. Also involved in other processes including regulation of transcription, translation of its cognate mRNA, spindle formation and chromosome movement during mitosis, and apoptosis. The chain is Small ribosomal subunit protein uS3 (rps3) from Ictalurus punctatus (Channel catfish).